We begin with the raw amino-acid sequence, 134 residues long: Small ribosomal subunit protein bS16 (134 aa).

The interval 81-134 is disordered; sequence LAKRPARSNPKKAEPGKKAQERLAAARQAEEEAKAAAEAAAAAPAEAPAEEAAS. Residues 91 to 101 show a composition bias toward basic and acidic residues; it reads KKAEPGKKAQE. Over residues 116-134 the composition is skewed to low complexity; that stretch reads AAEAAAAAPAEAPAEEAAS.

This sequence belongs to the bacterial ribosomal protein bS16 family.

The protein is Small ribosomal subunit protein bS16 of Chelativorans sp. (strain BNC1).